Reading from the N-terminus, the 341-residue chain is Peroxisomal membrane protein import receptor PEX19 (341 aa).

The segment covering 1-18 (MNENEYDNFDDLDDLLDE) has biased composition (acidic residues). Disordered stretches follow at residues 1-26 (MNEN…LDEQ), 39-66 (DSEN…EDPE), 109-141 (VPRQ…FKNI), 293-312 (LGDS…NEEE), and 318-341 (LEID…CKQQ). Over residues 39–53 (DSENKEKNAESKDSD) the composition is skewed to basic and acidic residues. S61 is subject to Phosphoserine. Over residues 113 to 141 (QMEQGSSSLKSNSTDKGTLNGSNPGFKNI) the composition is skewed to polar residues. S303 is subject to Phosphoserine. A compositionally biased stretch (basic and acidic residues) spans 330–341 (LDKELTDGCKQQ). C338 carries the post-translational modification Cysteine methyl ester. The S-farnesyl cysteine moiety is linked to residue C338. Positions 339 to 341 (KQQ) are cleaved as a propeptide — removed in mature form.

This sequence belongs to the peroxin-19 family. As to quaternary structure, interacts (farnesylated) with PEX3; farnesylation is required for this interaction. Interacts with PEX2, PEX5, PEX10, PEX11, PEX12, PEX13, PEX14, PEX17, PEX22, PEX25, PEX30 and PEX32; the interaction requires well-defined PEX19-binding sites within the peroxisomal membrane protein targeting signal (mPTS) of the PMPs and is independent on the presence of PEX3. Interacts with VPS1.

It localises to the cytoplasm. The protein localises to the peroxisome membrane. The protein resides in the endoplasmic reticulum membrane. Functionally, required for proper post-translational import and stabilization of peroxisomal membrane proteins (PMPs). Acts as a cytosolic import receptor for PMPs and delivers them to the docking factor PEX3 at the peroxisomal membrane for subsequent insertion into the membrane. Acts as a chaperone in stabilizing or maintaining PMPs in the lipid bilayer. Directs PEX17, a peripheral component of the peroxisomal matrix protein translocation machinery, to peroxisomes. Stabilizes VPS1, a protein required for peroxisomal fission, at the peroxisomal membrane. Also acts in conjunction with PEX3 in the formation of peroxisomes from preperoxisomal compartments at the endoplasmic reticulum during de novo peroxisome synthesis, probably via the import of additional PMPs. The protein is Peroxisomal membrane protein import receptor PEX19 (PEX19) of Saccharomyces cerevisiae (strain YJM789) (Baker's yeast).